The primary structure comprises 403 residues: MSFRSLIQEMRDEFGSISRHSLRSRSHRGGGGAPRVAAVGPAEAAAMQQSCWAQLPPELLREVLVRIEESEVWWPSRRDVVACAGVCRSWRGITKEIVRVPEASGKLTFPISLKQPGPRDGTLKCFIRRNRTTQTYYLYIGLTEALADDGKFLLAARKCRKPTCTDYLISLDMSDMSKGSNTYIGKLRSNFLGTKFTVYDAHPPYDGAVVSKSRSARVVGLNQVSPRVPAGNYPVSHISYELNVLGARGPRRMNCIMDSIPTSAVQEGGKAPTQTEFPLSGLDSFPSISFFRSKSARIDSATSQLSTQKEEKLVLKNKSPRWHEQLQCWCLNFRGRVTVASVKNFQLVASDENGPTNQEQDKVILQFGKIGKDLFTMDYRYPISAFQSFAICLSSFDTKIACE.

One can recognise an F-box domain in the interval 50–105; it reads SCWAQLPPELLREVLVRIEESEVWWPSRRDVVACAGVCRSWRGITKEIVRVPEASG.

This sequence belongs to the TUB family. Ubiquitous.

This chain is Tubby-like F-box protein 6 (TULP6), found in Oryza sativa subsp. japonica (Rice).